The following is a 205-amino-acid chain: Guanylate kinase (205 aa).

The region spanning 6 to 185 is the Guanylate kinase-like domain; the sequence is GLLIVLSGPS…ACERIKAIVV (180 aa). 13 to 20 is an ATP binding site; sequence GPSGVGKG.

The protein belongs to the guanylate kinase family.

It localises to the cytoplasm. It carries out the reaction GMP + ATP = GDP + ADP. Essential for recycling GMP and indirectly, cGMP. In Bacillus anthracis, this protein is Guanylate kinase.